The sequence spans 284 residues: MEMO1 family protein YG5714_2180 (284 aa).

Belongs to the MEMO1 family.

The chain is MEMO1 family protein YG5714_2180 from Saccharolobus islandicus (strain Y.G.57.14 / Yellowstone #1) (Sulfolobus islandicus).